The sequence spans 429 residues: Cytochrome P450 BJ-3 (429 aa).

Cysteine 376 lines the heme pocket.

It belongs to the cytochrome P450 family. Requires heme as cofactor.

In terms of biological role, cytochromes P450 are a group of heme-thiolate monooxygenases. They oxidize a variety of structurally unrelated compounds, including steroids, fatty acids, and xenobiotics. The protein is Cytochrome P450 BJ-3 (cyp114) of Bradyrhizobium diazoefficiens (strain JCM 10833 / BCRC 13528 / IAM 13628 / NBRC 14792 / USDA 110).